The primary structure comprises 394 residues: Argininosuccinate synthase (394 aa).

ATP-binding positions include 7–15 (AYSGGLDTS) and Ala-34. 2 residues coordinate L-citrulline: Tyr-85 and Ser-90. ATP is bound at residue Gly-115. L-aspartate contacts are provided by Thr-117, Asn-121, and Asp-122. Asn-121 contacts L-citrulline. L-citrulline contacts are provided by Arg-125, Ser-176, Ser-185, Glu-261, and Tyr-273.

Belongs to the argininosuccinate synthase family. Type 1 subfamily. As to quaternary structure, homotetramer.

It localises to the cytoplasm. The catalysed reaction is L-citrulline + L-aspartate + ATP = 2-(N(omega)-L-arginino)succinate + AMP + diphosphate + H(+). Its pathway is amino-acid biosynthesis; L-arginine biosynthesis; L-arginine from L-ornithine and carbamoyl phosphate: step 2/3. The protein is Argininosuccinate synthase of Ehrlichia ruminantium (strain Gardel).